A 146-amino-acid polypeptide reads, in one-letter code: Small ribosomal subunit protein uS9 (146 aa).

Belongs to the universal ribosomal protein uS9 family. Component of the small ribosomal subunit.

The protein resides in the cytoplasm. Its function is as follows. Component of the small ribosomal subunit. The ribosome is a large ribonucleoprotein complex responsible for the synthesis of proteins in the cell. This chain is Small ribosomal subunit protein uS9 (rps16), found in Ictalurus punctatus (Channel catfish).